The following is a 510-amino-acid chain: Membrane-bound transcription factor site-2 protease (510 aa).

Residues 1–3 (MIP) lie on the Cytoplasmic side of the membrane. Residues 4–24 (VSLVVVVVGGWTAVYLADLVL) traverse the membrane as a helical segment. The Lumenal portion of the chain corresponds to 25 to 74 (KSSVYFKHSYEDWLEKNGLSISPFHIRWQTSVFNRAFYSWGRRKARMLYQ). 2 helical membrane passes run 75–95 (WFNFGMVFGVIAMFSSFFLLG) and 96–107 (KTLMQTLAQMMA). Residues 108-135 (DSPSSSSSSSSSSSSSSSSSIHNEQVLQ) lie on the Lumenal side of the membrane. Residues 136 to 160 (VVVPGINLPVNQLTYFFAAVLISGV) traverse the membrane as a helical segment. Histidine 162 contacts Zn(2+). The active site involves glutamate 163. The next 3 helical transmembrane spans lie at 165-177 (GHGIAAIREQVRF), 178-200 (NGFGIFLFIIYPGAFVDLFTTHL), and 220-242 (FVLALLGILALVLLPVILLPFYY). Histidine 166 serves as a coordination point for Zn(2+). The Lumenal portion of the chain corresponds to 243 to 437 (TGVGVLITEV…LPVIVETFVK (195 aa)). Asparagine 328 carries an N-linked (GlcNAc...) asparagine glycan. The next 2 helical transmembrane spans lie at 438–455 (YLISLSGALAIVNAVPCF) and 456–467 (ALDGQWILNSFL). Topologically, residues 468–483 (DATLTSVIGDNDVKDL) are lumenal. A helical membrane pass occupies residues 484–504 (IGFFILLGGSVLLAANVTLGL). Residues 505 to 510 (WMVTAR) lie on the Cytoplasmic side of the membrane.

This sequence belongs to the peptidase M50A family. Requires Zn(2+) as cofactor.

The protein resides in the membrane. It is found in the cytoplasm. Its subcellular location is the golgi apparatus membrane. The catalysed reaction is Cleaves several transcription factors that are type-2 transmembrane proteins within membrane-spanning domains. Known substrates include sterol regulatory element-binding protein (SREBP) -1, SREBP-2 and forms of the transcriptional activator ATF6. SREBP-2 is cleaved at the site 477-DRSRILL-|-CVLTFLCLSFNPLTSLLQWGGA-505. The residues Asn-Pro, 11 residues distal to the site of cleavage in the membrane-spanning domain, are important for cleavage by S2P endopeptidase. Replacement of either of these residues does not prevent cleavage, but there is no cleavage if both of these residues are replaced.. Functionally, zinc metalloprotease that mediates intramembrane proteolysis of proteins such as ATF6, ATF6B, SREBF1/SREBP1 and SREBF2/SREBP2. Catalyzes the second step in the proteolytic activation of the sterol regulatory element-binding proteins (SREBPs) SREBF1/SREBP1 and SREBF2/SREBP2: cleaves SREBPs within the first transmembrane segment, thereby releasing the N-terminal segment with a portion of the transmembrane segment attached. Mature N-terminal SREBP fragments shuttle to the nucleus and activate gene transcription. Also mediates the second step in the proteolytic activation of the cyclic AMP-dependent transcription factor ATF-6 (ATF6 and ATF6B). Involved in intramembrane proteolysis during bone formation. In astrocytes and osteoblasts, upon DNA damage and ER stress, mediates the second step of the regulated intramembrane proteolytic activation of the transcription factor CREB3L1, leading to the inhibition of cell-cycle progression. This Cricetulus griseus (Chinese hamster) protein is Membrane-bound transcription factor site-2 protease (MBTPS2).